A 316-amino-acid chain; its full sequence is MRXRWPAQPSKYDRLIAAARAEAPAVTIVAHPCDETSLGGAIEAAEMGLITPILVAPEAKIRNVAAEHRLDLGRREIVDVPHSHAAAAKAVALIREGRGELLMKGSLHTDELMHEVAASATGLRTQRRISHVFVMDVPGHTDTLFITDAAINIFPDLEAKRDIVQNAIDLWVAIGLGEPRVAILSAVETVTAKIPSTIEAAALCKMAERGQITGGVLEGPLAFDNAIDQEAARIKGINSPVAGHAQILVVPDLEAGNMLAKNLTFLTHADAAGLVLGARVPIVLTSRADSVRTRLASCAVAALYAARRRAAQVAAV.

It belongs to the phosphate acetyltransferase and butyryltransferase family.

It is found in the cytoplasm. It catalyses the reaction acetyl-CoA + phosphate = acetyl phosphate + CoA. It functions in the pathway metabolic intermediate biosynthesis; acetyl-CoA biosynthesis; acetyl-CoA from acetate: step 2/2. The sequence is that of Phosphate acetyltransferase (pta) from Rhizobium meliloti (Ensifer meliloti).